The chain runs to 515 residues: Leucine-rich repeat transmembrane neuronal protein 2 (515 aa).

A signal peptide spans 1-33 (MGLHFKWPLGAPMLAAIYAMSVVLKMLPALGMA). The Extracellular portion of the chain corresponds to 34 to 421 (CPPKCRCEKL…EPDNAIFTQR (388 aa)). A glycan (N-linked (GlcNAc...) asparagine) is linked at Asn-57. LRR repeat units follow at residues 61–83 (KGSL…QFAS), 84–107 (FSQL…AFQG), 109–131 (YKLK…TFTQ), 132–155 (LINL…LFYG), 156–179 (LRKL…LFWD), 181–203 (RSLE…GFAG), 205–227 (IKLR…HFLR), 229–251 (SSLH…MEWT), 252–275 (WSTL…VFET), and 276–299 (MPNL…ILSS). A glycan (N-linked (GlcNAc...) asparagine) is linked at Asn-126. N-linked (GlcNAc...) asparagine glycosylation is present at Asn-243. A glycan (N-linked (GlcNAc...) asparagine) is linked at Asn-362. The helical transmembrane segment at 422 to 442 (VITGTMALLFSFFFIIFIVFI) threads the bilayer. Over 443-515 (SRKCCPPTLR…QQLPYKECEV (73 aa)) the chain is Cytoplasmic. The Involved in DLG4-binding motif lies at 512–515 (ECEV).

It belongs to the LRRTM family. Interacts with DLG4. Interacts with neurexin NRXN1; interaction is mediated by heparan sulfate glycan modification on neurexin. Expressed in neuronal tissues. Widely distributed in neuropil regions in discrete puncta throughout the brain (at protein level). Detected in cortex, thalamus, striatum, olfactory bulb, cerebellum and all hippocampal subfields (at protein level). More abundant in deep than in superficial layers of neocortex (at protein level).

It localises to the cell membrane. The protein localises to the postsynaptic cell membrane. Its function is as follows. Involved in the development and maintenance of excitatory synapses in the nervous system. Regulates surface expression of AMPA receptors and instructs the development of functional glutamate release sites. Acts as a ligand for the presynaptic receptors NRXN1-A and NRXN1-B. This chain is Leucine-rich repeat transmembrane neuronal protein 2 (Lrrtm2), found in Rattus norvegicus (Rat).